We begin with the raw amino-acid sequence, 511 residues long: Ribonuclease Y (511 aa).

A helical transmembrane segment spans residues 3 to 23; the sequence is VGILIGIIILGVVGFIQYTLI. Residues 201–286 form the KH domain; sequence TVHVVALPND…EMVERAIKDV (86 aa). The HD domain maps to 327 to 420; the sequence is VLKHSIEVSY…VQAADAISAA (94 aa).

The protein belongs to the RNase Y family.

It localises to the cell membrane. In terms of biological role, endoribonuclease that initiates mRNA decay. This Clostridium perfringens (strain ATCC 13124 / DSM 756 / JCM 1290 / NCIMB 6125 / NCTC 8237 / Type A) protein is Ribonuclease Y.